We begin with the raw amino-acid sequence, 207 residues long: Small ribosomal subunit protein uS4 (207 aa).

Positions 96–159 (RRLDNVVYRL…RASTFIADNI (64 aa)) constitute an S4 RNA-binding domain.

Belongs to the universal ribosomal protein uS4 family. Part of the 30S ribosomal subunit. Contacts protein S5. The interaction surface between S4 and S5 is involved in control of translational fidelity.

In terms of biological role, one of the primary rRNA binding proteins, it binds directly to 16S rRNA where it nucleates assembly of the body of the 30S subunit. With S5 and S12 plays an important role in translational accuracy. This is Small ribosomal subunit protein uS4 from Leptospira borgpetersenii serovar Hardjo-bovis (strain JB197).